The following is a 180-amino-acid chain: Glycodelin (180 aa).

The N-terminal stretch at 1–18 (MLCLLLTLGVALVCGVPA) is a signal peptide. 2 N-linked (GlcNAc...) (complex) asparagine glycosylation sites follow: N46 and N81. 2 disulfides stabilise this stretch: C84/C178 and C124/C137.

This sequence belongs to the calycin superfamily. Lipocalin family. As to quaternary structure, homodimer. Post-translationally, four distinct glycoforms A, C, F and S arise from different N-linked oligosaccharide chains at amino acid residues Asn-46 and Asn-81. Glycodelin-A and -F are taken up by the cumulus cells in which partial deglycosylation takes place to produce glycodelin-C. This protein is, the main protein synthesized and secreted in the endometrium from mid-luteal phase of the menstrual cycle and during the first semester of pregnancy. Glycodelin-A is expressed in amniotic fluid, endometrium/decidua and maternal serum (at protein level). Glycodelin-F is expressed in follicular fluid, luteinized granulosa cells and the oviduct (at protein level). Glycodelin-S is expressed in seminal plasma and seminal vesicles (at protein level). Glycodelin-C is detected in cumulus cells (at protein level), but cumulus cells do not synthesize Glycodelin-C but take up and convert glycodelin-A and -F vis glycan remodeling.

The protein localises to the secreted. Glycoprotein that regulates critical steps during fertilization and also has immunomonomodulatory effects. Four glycoforms, namely glycodelin-S, -A, -F and -C have been identified in reproductive tissues that differ in glycosylation and biological activity. Glycodelin-A has contraceptive and immunosuppressive activities. Glycodelin-C stimulates binding of spermatozoa to the zona pellucida. Glycodelin-F inhibits spermatozoa-zona pellucida binding and significantly suppresses progesterone-induced acrosome reaction of spermatozoa. Glycodelin-S in seminal plasma maintains the uncapacitated state of human spermatozoa. The protein is Glycodelin (PAEP) of Homo sapiens (Human).